A 704-amino-acid polypeptide reads, in one-letter code: Phosphoribosylformylglycinamidine synthase subunit PurL (704 aa).

Histidine 32 is an active-site residue. Tyrosine 35 lines the ATP pocket. A Mg(2+)-binding site is contributed by glutamate 76. Substrate contacts are provided by residues 77–80 and arginine 99; that span reads SHNH. The active-site Proton acceptor is the histidine 78. Residue aspartate 100 coordinates Mg(2+). Glutamine 224 is a substrate binding site. Aspartate 252 provides a ligand contact to Mg(2+). A substrate-binding site is contributed by 296-298; the sequence is ESQ. Residues aspartate 471 and glycine 508 each contribute to the ATP site. Position 509 (asparagine 509) interacts with Mg(2+). Serine 511 contacts substrate.

This sequence belongs to the FGAMS family. Monomer. Part of the FGAM synthase complex composed of 1 PurL, 1 PurQ and 2 PurS subunits.

It localises to the cytoplasm. The catalysed reaction is N(2)-formyl-N(1)-(5-phospho-beta-D-ribosyl)glycinamide + L-glutamine + ATP + H2O = 2-formamido-N(1)-(5-O-phospho-beta-D-ribosyl)acetamidine + L-glutamate + ADP + phosphate + H(+). It participates in purine metabolism; IMP biosynthesis via de novo pathway; 5-amino-1-(5-phospho-D-ribosyl)imidazole from N(2)-formyl-N(1)-(5-phospho-D-ribosyl)glycinamide: step 1/2. Functionally, part of the phosphoribosylformylglycinamidine synthase complex involved in the purines biosynthetic pathway. Catalyzes the ATP-dependent conversion of formylglycinamide ribonucleotide (FGAR) and glutamine to yield formylglycinamidine ribonucleotide (FGAM) and glutamate. The FGAM synthase complex is composed of three subunits. PurQ produces an ammonia molecule by converting glutamine to glutamate. PurL transfers the ammonia molecule to FGAR to form FGAM in an ATP-dependent manner. PurS interacts with PurQ and PurL and is thought to assist in the transfer of the ammonia molecule from PurQ to PurL. In Pyrococcus furiosus (strain ATCC 43587 / DSM 3638 / JCM 8422 / Vc1), this protein is Phosphoribosylformylglycinamidine synthase subunit PurL.